Consider the following 530-residue polypeptide: Bifunctional purine biosynthesis protein PurH (530 aa).

The 148-residue stretch at 1 to 148 folds into the MGS-like domain; the sequence is MNNPRPIRRA…KNHKDVTIVV (148 aa).

Belongs to the PurH family.

It catalyses the reaction (6R)-10-formyltetrahydrofolate + 5-amino-1-(5-phospho-beta-D-ribosyl)imidazole-4-carboxamide = 5-formamido-1-(5-phospho-D-ribosyl)imidazole-4-carboxamide + (6S)-5,6,7,8-tetrahydrofolate. The enzyme catalyses IMP + H2O = 5-formamido-1-(5-phospho-D-ribosyl)imidazole-4-carboxamide. Its pathway is purine metabolism; IMP biosynthesis via de novo pathway; 5-formamido-1-(5-phospho-D-ribosyl)imidazole-4-carboxamide from 5-amino-1-(5-phospho-D-ribosyl)imidazole-4-carboxamide (10-formyl THF route): step 1/1. It participates in purine metabolism; IMP biosynthesis via de novo pathway; IMP from 5-formamido-1-(5-phospho-D-ribosyl)imidazole-4-carboxamide: step 1/1. This chain is Bifunctional purine biosynthesis protein PurH, found in Aliivibrio salmonicida (strain LFI1238) (Vibrio salmonicida (strain LFI1238)).